Here is a 276-residue protein sequence, read N- to C-terminus: Probable endonuclease 4 (276 aa).

Positions 70, 108, 143, 176, 179, 210, 223, 225, and 255 each coordinate Zn(2+).

It belongs to the AP endonuclease 2 family. Zn(2+) is required as a cofactor.

It catalyses the reaction Endonucleolytic cleavage to 5'-phosphooligonucleotide end-products.. In terms of biological role, endonuclease IV plays a role in DNA repair. It cleaves phosphodiester bonds at apurinic or apyrimidinic (AP) sites, generating a 3'-hydroxyl group and a 5'-terminal sugar phosphate. The polypeptide is Probable endonuclease 4 (Mesomycoplasma hyopneumoniae (strain 7448) (Mycoplasma hyopneumoniae)).